Reading from the N-terminus, the 278-residue chain is Bicarbonate transport ATP-binding protein CmpD (278 aa).

Positions Leu-21–Glu-254 constitute an ABC transporter domain. Gly-57–Ser-64 is a binding site for ATP.

The protein belongs to the ABC transporter superfamily. Nitrate/nitrite/cyanate uptake transporter (NitT) (TC 3.A.1.16) family. In terms of assembly, the complex is composed of two ATP-binding proteins (CmpC and CmpD), a transmembrane protein (CmpB) and a solute-binding protein (CmpA).

It is found in the cell inner membrane. Its function is as follows. Part of the ABC transporter complex CmpABCD involved in bicarbonate transport. Responsible for energy coupling to the transport system. The polypeptide is Bicarbonate transport ATP-binding protein CmpD (cmpD) (Synechococcus elongatus (strain ATCC 33912 / PCC 7942 / FACHB-805) (Anacystis nidulans R2)).